We begin with the raw amino-acid sequence, 817 residues long: Anaphase-promoting complex subunit 4 (817 aa).

Tyr469 carries the phosphotyrosine modification. Phosphoserine occurs at positions 757 and 758. A Glycyl lysine isopeptide (Lys-Gly) (interchain with G-Cter in SUMO2) cross-link involves residue Lys772. Residues Ser777 and Ser779 each carry the phosphoserine modification. Lys798 is covalently cross-linked (Glycyl lysine isopeptide (Lys-Gly) (interchain with G-Cter in SUMO2)).

The protein belongs to the APC4 family. The mammalian APC/C is composed at least of 14 distinct subunits ANAPC1, ANAPC2, CDC27/APC3, ANAPC4, ANAPC5, CDC16/APC6, ANAPC7, CDC23/APC8, ANAPC10, ANAPC11, CDC26/APC12, ANAPC13, ANAPC15 and ANAPC16 that assemble into a complex of at least 19 chains with a combined molecular mass of around 1.2 MDa; APC/C interacts with FZR1 and FBXO5. In the context of the APC/C complex, directly interacts with UBE2S.

Its subcellular location is the nucleus. The protein operates within protein modification; protein ubiquitination. In terms of biological role, component of the anaphase promoting complex/cyclosome (APC/C), a cell cycle-regulated E3 ubiquitin ligase that controls progression through mitosis and the G1 phase of the cell cycle. The APC/C complex acts by mediating ubiquitination and subsequent degradation of target proteins: it mainly mediates the formation of 'Lys-11'-linked polyubiquitin chains and, to a lower extent, the formation of 'Lys-48'- and 'Lys-63'-linked polyubiquitin chains. The APC/C complex catalyzes assembly of branched 'Lys-11'-/'Lys-48'-linked branched ubiquitin chains on target proteins. The sequence is that of Anaphase-promoting complex subunit 4 (ANAPC4) from Pongo abelii (Sumatran orangutan).